A 318-amino-acid chain; its full sequence is tRNA U34 carboxymethyltransferase (318 aa).

Residues Lys-88, Trp-102, Lys-107, Gly-126, Met-192, Tyr-196, and Arg-311 each contribute to the carboxy-S-adenosyl-L-methionine site.

Belongs to the class I-like SAM-binding methyltransferase superfamily. CmoB family. In terms of assembly, homotetramer.

It catalyses the reaction carboxy-S-adenosyl-L-methionine + 5-hydroxyuridine(34) in tRNA = 5-carboxymethoxyuridine(34) in tRNA + S-adenosyl-L-homocysteine + H(+). Functionally, catalyzes carboxymethyl transfer from carboxy-S-adenosyl-L-methionine (Cx-SAM) to 5-hydroxyuridine (ho5U) to form 5-carboxymethoxyuridine (cmo5U) at position 34 in tRNAs. The polypeptide is tRNA U34 carboxymethyltransferase (Pseudomonas fluorescens (strain SBW25)).